Consider the following 1547-residue polypeptide: Mediator of RNA polymerase II transcription subunit 12 (1547 aa).

2 disordered regions span residues 1-63 and 1356-1509; these read MTSR…RPHI and PVIP…QQRD. Pro residues predominate over residues 1357 to 1369; it reads VIPPLEPPQPPNP. Residues 1379 to 1390 show a composition bias toward polar residues; that stretch reads YQSPQMTSNTAA. Composition is skewed to low complexity over residues 1398–1413 and 1446–1468; these read QQQQQSQTLQPSQQTQ and LSPLQQMQHMQQLQGLAQQRASQ. Composition is skewed to polar residues over residues 1469-1480 and 1499-1509; these read PSPIHSQRPTSV and AHTSYVNQQRD.

Belongs to the Mediator complex subunit 12 family. As to quaternary structure, component of the SRB8-11 complex, which itself associates with the Mediator complex.

It localises to the nucleus. Functionally, component of the SRB8-11 complex. The SRB8-11 complex is a regulatory module of the Mediator complex which is itself involved in regulation of basal and activated RNA polymerase II-dependent transcription. The SRB8-11 complex may be involved in the transcriptional repression of a subset of genes regulated by Mediator. It may inhibit the association of the Mediator complex with RNA polymerase II to form the holoenzyme complex. This chain is Mediator of RNA polymerase II transcription subunit 12 (SRB8), found in Phaeosphaeria nodorum (strain SN15 / ATCC MYA-4574 / FGSC 10173) (Glume blotch fungus).